Here is a 425-residue protein sequence, read N- to C-terminus: Serine--tRNA ligase (425 aa).

Position 230-232 (230-232 (TSE)) interacts with L-serine. Residues 261-263 (RRE) and valine 277 each bind ATP. Glutamate 284 is an L-serine binding site. An ATP-binding site is contributed by 348–351 (ELTS). Threonine 382 contacts L-serine.

This sequence belongs to the class-II aminoacyl-tRNA synthetase family. Type-1 seryl-tRNA synthetase subfamily. As to quaternary structure, homodimer. The tRNA molecule binds across the dimer.

It localises to the cytoplasm. The enzyme catalyses tRNA(Ser) + L-serine + ATP = L-seryl-tRNA(Ser) + AMP + diphosphate + H(+). The catalysed reaction is tRNA(Sec) + L-serine + ATP = L-seryl-tRNA(Sec) + AMP + diphosphate + H(+). It participates in aminoacyl-tRNA biosynthesis; selenocysteinyl-tRNA(Sec) biosynthesis; L-seryl-tRNA(Sec) from L-serine and tRNA(Sec): step 1/1. Catalyzes the attachment of serine to tRNA(Ser). Is also able to aminoacylate tRNA(Sec) with serine, to form the misacylated tRNA L-seryl-tRNA(Sec), which will be further converted into selenocysteinyl-tRNA(Sec). This Streptomyces coelicolor (strain ATCC BAA-471 / A3(2) / M145) protein is Serine--tRNA ligase.